Reading from the N-terminus, the 609-residue chain is Proteasome-associated ATPase (609 aa).

The interval 1-24 (MGESERSEAFGIPRDSPLSSGDAA) is disordered. The stretch at 20–96 (SGDAAELEQL…LREEVDRLGQ (77 aa)) forms a coiled coil. 296 to 301 (GCGKTL) lines the ATP pocket. A docks into pockets in the proteasome alpha-ring region spans residues 608–609 (YL).

It belongs to the AAA ATPase family. In terms of assembly, homohexamer. Assembles into a hexameric ring structure that caps the 20S proteasome core. Strongly interacts with the prokaryotic ubiquitin-like protein Pup through a hydrophobic interface; the interacting region of ARC lies in its N-terminal coiled-coil domain. There is one Pup binding site per ARC hexamer ring. Upon ATP-binding, the C-terminus of ARC interacts with the alpha-rings of the proteasome core, possibly by binding to the intersubunit pockets.

It participates in protein degradation; proteasomal Pup-dependent pathway. ATPase which is responsible for recognizing, binding, unfolding and translocation of pupylated proteins into the bacterial 20S proteasome core particle. May be essential for opening the gate of the 20S proteasome via an interaction with its C-terminus, thereby allowing substrate entry and access to the site of proteolysis. Thus, the C-termini of the proteasomal ATPase may function like a 'key in a lock' to induce gate opening and therefore regulate proteolysis. The sequence is that of Proteasome-associated ATPase from Mycobacterium bovis (strain BCG / Pasteur 1173P2).